Reading from the N-terminus, the 701-residue chain is Long chain acyl-CoA synthetase 6, peroxisomal (701 aa).

Positions 1–38 are cleaved as a propeptide — removed in mature form; it reads MDSSSSSSSAAARRRINAIHSHLVTSSRSSPLLRSNPT. The Microbody targeting signal signature appears at 15–23; the sequence is RINAIHSHL. 266–277 provides a ligand contact to ATP; it reads ICYTSGTTGTPK. Positions 526-550 are fatty acid-binding; that stretch reads DGWLHTGDIGLWLPGGRLKIIDRKK.

It belongs to the ATP-dependent AMP-binding enzyme family. Mg(2+) is required as a cofactor. In terms of tissue distribution, expressed in roots, stems, leaves flowers and germinating seedling. Preferentially expressed in seeds and senescent leaves.

The protein localises to the peroxisome. It is found in the glyoxysome membrane. The enzyme catalyses a long-chain fatty acid + ATP + CoA = a long-chain fatty acyl-CoA + AMP + diphosphate. It carries out the reaction tetradecanoate + ATP + CoA = tetradecanoyl-CoA + AMP + diphosphate. It catalyses the reaction hexadecanoate + ATP + CoA = hexadecanoyl-CoA + AMP + diphosphate. The catalysed reaction is (9Z)-octadecenoate + ATP + CoA = (9Z)-octadecenoyl-CoA + AMP + diphosphate. The enzyme catalyses (9Z,12Z)-octadecadienoate + ATP + CoA = (9Z,12Z)-octadecadienoyl-CoA + AMP + diphosphate. It carries out the reaction (9Z,12Z,15Z)-octadecatrienoate + ATP + CoA = (9Z,12Z,15Z)-octadecatrienoyl-CoA + AMP + diphosphate. The protein operates within lipid metabolism; fatty acid metabolism. Functionally, activation of long-chain fatty acids for both synthesis of cellular lipids, and degradation via beta-oxidation. Preferentially uses palmitate, palmitoleate, oleate, linoleate and eicosenoate as substrates. Can use myristate and linolenate as substrates. May play a regulatory role both in fatty acid import into glyoxysomes and in fatty acid beta-oxidation. Functions redundantly with LACS7 in lipid mobilization for beta-oxidation during seed germination, which is essential for postgerminative growth and seedling establishment. This is Long chain acyl-CoA synthetase 6, peroxisomal from Arabidopsis thaliana (Mouse-ear cress).